We begin with the raw amino-acid sequence, 525 residues long: Glutamate synthase large subunit-like protein YerD (525 aa).

A helical membrane pass occupies residues 4–24 (IIIALIAFIIGIIAIPIVLFA).

The protein belongs to the glutamate synthase family.

It localises to the cell membrane. This is Glutamate synthase large subunit-like protein YerD (yerD) from Bacillus subtilis (strain 168).